A 156-amino-acid chain; its full sequence is Protein-export protein SecB (156 aa).

It belongs to the SecB family. Homotetramer, a dimer of dimers. One homotetramer interacts with 1 SecA dimer.

The protein resides in the cytoplasm. One of the proteins required for the normal export of preproteins out of the cell cytoplasm. It is a molecular chaperone that binds to a subset of precursor proteins, maintaining them in a translocation-competent state. It also specifically binds to its receptor SecA. This chain is Protein-export protein SecB, found in Yersinia enterocolitica serotype O:8 / biotype 1B (strain NCTC 13174 / 8081).